A 629-amino-acid chain; its full sequence is DNA ligase B (629 aa).

K151 functions as the N6-AMP-lysine intermediate in the catalytic mechanism. Positions 588–597 (LQKQHGTNTR) are enriched in polar residues. The disordered stretch occupies residues 588–629 (LQKQHGTNTRNEQKGDVRRVDVKQDNGTTWLPEQDSNLRPND). Over residues 598–611 (NEQKGDVRRVDVKQ) the composition is skewed to basic and acidic residues. Residues 612–629 (DNGTTWLPEQDSNLRPND) show a composition bias toward polar residues.

This sequence belongs to the NAD-dependent DNA ligase family. LigB subfamily.

The catalysed reaction is NAD(+) + (deoxyribonucleotide)n-3'-hydroxyl + 5'-phospho-(deoxyribonucleotide)m = (deoxyribonucleotide)n+m + AMP + beta-nicotinamide D-nucleotide.. In terms of biological role, catalyzes the formation of phosphodiester linkages between 5'-phosphoryl and 3'-hydroxyl groups in double-stranded DNA using NAD as a coenzyme and as the energy source for the reaction. The polypeptide is DNA ligase B (Chromohalobacter salexigens (strain ATCC BAA-138 / DSM 3043 / CIP 106854 / NCIMB 13768 / 1H11)).